The primary structure comprises 199 residues: Recombination protein RecR (199 aa).

Residues 58–73 (CRRCFNLTEGEECDIC) form a C4-type zinc finger. Residues 81–176 (SVICVVEDPY…RVTALASGLP (96 aa)) form the Toprim domain.

This sequence belongs to the RecR family.

In terms of biological role, may play a role in DNA repair. It seems to be involved in an RecBC-independent recombinational process of DNA repair. It may act with RecF and RecO. This chain is Recombination protein RecR, found in Rubrobacter xylanophilus (strain DSM 9941 / JCM 11954 / NBRC 16129 / PRD-1).